Consider the following 447-residue polypeptide: Exodeoxyribonuclease 7 large subunit (447 aa).

This sequence belongs to the XseA family. Heterooligomer composed of large and small subunits.

The protein localises to the cytoplasm. The enzyme catalyses Exonucleolytic cleavage in either 5'- to 3'- or 3'- to 5'-direction to yield nucleoside 5'-phosphates.. In terms of biological role, bidirectionally degrades single-stranded DNA into large acid-insoluble oligonucleotides, which are then degraded further into small acid-soluble oligonucleotides. This Lactiplantibacillus plantarum (strain ATCC BAA-793 / NCIMB 8826 / WCFS1) (Lactobacillus plantarum) protein is Exodeoxyribonuclease 7 large subunit.